The following is a 321-amino-acid chain: PI-PLC X domain-containing protein 3 (321 aa).

Residues serine 22–serine 197 form the PI-PLC X-box domain. Catalysis depends on residues histidine 37 and histidine 114.

Expressed at highest levels in heart. Also detected in kidney, lung, small intestine and colon. Expressed at very low levels, if any, in leukocytes, thymus and skeletal muscle.

The protein localises to the cytoplasm. The chain is PI-PLC X domain-containing protein 3 (PLCXD3) from Homo sapiens (Human).